A 328-amino-acid chain; its full sequence is 3-dehydroquinate synthase (328 aa).

It belongs to the archaeal-type DHQ synthase family.

The enzyme catalyses 2-amino-2,3,7-trideoxy-D-lyxo-hept-6-ulosonate + NAD(+) + H2O = 3-dehydroquinate + NH4(+) + NADH + H(+). Functionally, catalyzes the oxidative deamination and cyclization of 2-amino-3,7-dideoxy-D-threo-hept-6-ulosonic acid (ADH) to yield 3-dehydroquinate (DHQ), which is fed into the canonical shikimic pathway of aromatic amino acid biosynthesis. In Methanospirillum hungatei JF-1 (strain ATCC 27890 / DSM 864 / NBRC 100397 / JF-1), this protein is 3-dehydroquinate synthase.